The sequence spans 255 residues: Hydroxyacylglutathione hydrolase (255 aa).

Residues histidine 55, histidine 57, aspartate 59, histidine 60, histidine 113, aspartate 132, and histidine 170 each contribute to the Zn(2+) site.

This sequence belongs to the metallo-beta-lactamase superfamily. Glyoxalase II family. In terms of assembly, monomer. Zn(2+) serves as cofactor.

It catalyses the reaction an S-(2-hydroxyacyl)glutathione + H2O = a 2-hydroxy carboxylate + glutathione + H(+). It functions in the pathway secondary metabolite metabolism; methylglyoxal degradation; (R)-lactate from methylglyoxal: step 2/2. In terms of biological role, thiolesterase that catalyzes the hydrolysis of S-D-lactoyl-glutathione to form glutathione and D-lactic acid. The polypeptide is Hydroxyacylglutathione hydrolase (Methylobacterium sp. (strain 4-46)).